Consider the following 371-residue polypeptide: uncharacterized protein (371 aa).

This sequence to A.pernix APE_1804 and S.solfataricus SSO2105.

This is an uncharacterized protein from Aeropyrum pernix (strain ATCC 700893 / DSM 11879 / JCM 9820 / NBRC 100138 / K1).